A 356-amino-acid chain; its full sequence is cGAMP-activated phospholipase (356 aa).

The PNPLA domain occupies leucine 15–leucine 206. A GXGXXG motif is present at residues glycine 19 to glycine 24. A GXSXG motif is present at residues glycine 58–glycine 62. The active-site Nucleophile is serine 60. Residue aspartate 193 is the Proton acceptor of the active site. The DGA/G motif lies at aspartate 193 to glycine 195.

It belongs to the patatin family.

It carries out the reaction a 1,2-diacyl-sn-glycero-3-phosphocholine + H2O = a 2-acyl-sn-glycero-3-phosphocholine + a fatty acid + H(+). It catalyses the reaction 1,2-di-(9Z-octadecenoyl)-sn-glycero-3-phosphoethanolamine + 2 H2O = sn-glycero-3-phosphoethanolamine + 2 (9Z)-octadecenoate + 2 H(+). With respect to regulation, phospholipase activity is specifically activated upon 3',3'-cGAMP binding, which is produced by the cognate cyclic nucleotide synthase encoded in the same operon. Functionally, effector phospholipase of a CBASS antiviral system. CBASS (cyclic oligonucleotide-based antiphage signaling system) provides immunity against bacteriophages. The CD-NTase protein (DncV) synthesizes cyclic nucleotides in response to infection; these serve as specific second messenger signals. The signals activate a diverse range of effectors, leading to bacterial cell death and thus abortive phage infection. A type II-A(GA) CBASS system. Phospholipase that is activated upon binding to the cyclic dinucleotide (CDN) second messenger 3',3'-cyclic GMP-AMP (cGAMP). Degrades phospholipids in the cell membrane. Its function is as follows. Protects E.coli against phage infection. When capV and dncV are introduced in E.coli MG1655 there is 1000-fold protection against phage P1; protection against other phage (T2, T4, T5, T6 and lambda-vir) requires the 2 subsequent genes (cap2 and cap3). Upon P1 phage infection the activating molecule is produced between 30 and 40 minutes. Activation leads to bacterial cell lysis and death, which occurs before the phage has finished its replication cycle, thus protecting non-infected bacteria by aborting the phage infection and preventing its propagation. In another paper the capV-dncV-cap2-cap3 operon gives 10(4)-10(5)-fold protection against phages lambda, T2, T4 and T6, about 1000-fold protection against P1 and 10-fold protection against T5. The polypeptide is cGAMP-activated phospholipase (Escherichia coli (strain TW11681)).